The following is a 149-amino-acid chain: Large ribosomal subunit protein eL19 (149 aa).

Residues 55-69 (KGISSARKKEVQEQK) show a composition bias toward basic and acidic residues. Positions 55 to 93 (KGISSARKKEVQEQKRKGKRKGPGSRRGAKGARTPKKEK) are disordered. The span at 70–88 (RKGKRKGPGSRRGAKGART) shows a compositional bias: basic residues.

The protein belongs to the eukaryotic ribosomal protein eL19 family. In terms of assembly, part of the 50S ribosomal subunit.

In terms of biological role, binds to the 23S rRNA. The polypeptide is Large ribosomal subunit protein eL19 (Methanococcus vannielii).